The chain runs to 170 residues: Endoribonuclease YbeY (170 aa).

The Zn(2+) site is built by His-128, His-132, and His-138.

This sequence belongs to the endoribonuclease YbeY family. The cofactor is Zn(2+).

It is found in the cytoplasm. Its function is as follows. Single strand-specific metallo-endoribonuclease involved in late-stage 70S ribosome quality control and in maturation of the 3' terminus of the 16S rRNA. This chain is Endoribonuclease YbeY, found in Ruegeria sp. (strain TM1040) (Silicibacter sp.).